The primary structure comprises 350 residues: tRNA N6-adenosine threonylcarbamoyltransferase (350 aa).

Positions 113 and 117 each coordinate Fe cation. Substrate contacts are provided by residues 135 to 139 (LVSGG), Asp-169, Gly-182, Asp-186, and Asn-282. Position 310 (Asp-310) interacts with Fe cation.

Belongs to the KAE1 / TsaD family. Fe(2+) is required as a cofactor.

It localises to the cytoplasm. It carries out the reaction L-threonylcarbamoyladenylate + adenosine(37) in tRNA = N(6)-L-threonylcarbamoyladenosine(37) in tRNA + AMP + H(+). Its function is as follows. Required for the formation of a threonylcarbamoyl group on adenosine at position 37 (t(6)A37) in tRNAs that read codons beginning with adenine. Is involved in the transfer of the threonylcarbamoyl moiety of threonylcarbamoyl-AMP (TC-AMP) to the N6 group of A37, together with TsaE and TsaB. TsaD likely plays a direct catalytic role in this reaction. This is tRNA N6-adenosine threonylcarbamoyltransferase from Corynebacterium diphtheriae (strain ATCC 700971 / NCTC 13129 / Biotype gravis).